A 398-amino-acid polypeptide reads, in one-letter code: Elongation factor Tu (398 aa).

A tr-type G domain is found at 10 to 207 (KPHVNIGTIG…TVDEYIPEPE (198 aa)). The segment at 19 to 26 (GHVDHGKT) is G1. 19-26 (GHVDHGKT) provides a ligand contact to GTP. Thr-26 contributes to the Mg(2+) binding site. The interval 63–67 (GITIN) is G2. A G3 region spans residues 84–87 (DAPG). GTP is bound by residues 84–88 (DAPGH) and 139–142 (NKVD). Positions 139–142 (NKVD) are G4. Residues 177 to 179 (SAL) form a G5 region.

This sequence belongs to the TRAFAC class translation factor GTPase superfamily. Classic translation factor GTPase family. EF-Tu/EF-1A subfamily. Monomer.

Its subcellular location is the cytoplasm. It carries out the reaction GTP + H2O = GDP + phosphate + H(+). Functionally, GTP hydrolase that promotes the GTP-dependent binding of aminoacyl-tRNA to the A-site of ribosomes during protein biosynthesis. This Streptococcus sanguinis (strain SK36) protein is Elongation factor Tu.